Here is a 444-residue protein sequence, read N- to C-terminus: uncharacterized protein (444 aa).

A chloroplast-targeting transit peptide spans 1-72 (MGFLTAAIRV…RPMWNVSFLR (72 aa)). The interval 77–107 (HSTPARETGDDDISKSENSSSQDGDSCTKLK) is disordered. The span at 92-101 (SENSSSQDGD) shows a compositional bias: polar residues. In terms of domain architecture, CRM spans 175–272 (EILTPEEHFY…KNYVQPPTEI (98 aa)). The stretch at 292 to 355 (DALRAVRKYI…CLEDEQEEDE (64 aa)) forms a coiled coil. Disordered stretches follow at residues 344 to 364 (EECL…ATDS) and 392 to 426 (KFPA…PNFD). Residues 346–357 (CLEDEQEEDEAG) show a composition bias toward acidic residues. The segment covering 406 to 426 (DLGKAKSEGEENDDDKSPNFD) has biased composition (basic and acidic residues).

Its subcellular location is the plastid. The protein localises to the chloroplast. This is an uncharacterized protein from Arabidopsis thaliana (Mouse-ear cress).